We begin with the raw amino-acid sequence, 384 residues long: 1-deoxy-D-xylulose 5-phosphate reductoisomerase (384 aa).

NADPH-binding residues include T11, G12, S13, I14, K38, and N123. K124 lines the 1-deoxy-D-xylulose 5-phosphate pocket. E125 lines the NADPH pocket. Residue D148 coordinates Mn(2+). The 1-deoxy-D-xylulose 5-phosphate site is built by S149, E150, S174, and H197. Residue E150 participates in Mn(2+) binding. G203 is an NADPH binding site. 1-deoxy-D-xylulose 5-phosphate-binding residues include S210, N215, K216, and E219. A Mn(2+)-binding site is contributed by E219.

Belongs to the DXR family. Mg(2+) serves as cofactor. Requires Mn(2+) as cofactor.

It catalyses the reaction 2-C-methyl-D-erythritol 4-phosphate + NADP(+) = 1-deoxy-D-xylulose 5-phosphate + NADPH + H(+). The protein operates within isoprenoid biosynthesis; isopentenyl diphosphate biosynthesis via DXP pathway; isopentenyl diphosphate from 1-deoxy-D-xylulose 5-phosphate: step 1/6. In terms of biological role, catalyzes the NADPH-dependent rearrangement and reduction of 1-deoxy-D-xylulose-5-phosphate (DXP) to 2-C-methyl-D-erythritol 4-phosphate (MEP). This is 1-deoxy-D-xylulose 5-phosphate reductoisomerase from Halothermothrix orenii (strain H 168 / OCM 544 / DSM 9562).